The chain runs to 45 residues: Large ribosomal subunit protein bL34 (45 aa).

It belongs to the bacterial ribosomal protein bL34 family.

The sequence is that of Large ribosomal subunit protein bL34 from Acidothermus cellulolyticus (strain ATCC 43068 / DSM 8971 / 11B).